Here is a 176-residue protein sequence, read N- to C-terminus: Xanthine-guanine phosphoribosyltransferase (176 aa).

5-phospho-alpha-D-ribose 1-diphosphate-binding positions include 51–52 (RG), Arg-88, and 111–119 (DDLVDSGKT). Arg-88 provides a ligand contact to GMP. Asp-112 contacts Mg(2+). Guanine contacts are provided by Asp-115 and Ile-158. Residues Asp-115 and Ile-158 each contribute to the xanthine site. Residues 115–119 (DSGKT) and 157–158 (WI) each bind GMP.

It belongs to the purine/pyrimidine phosphoribosyltransferase family. XGPT subfamily. In terms of assembly, homotetramer. The cofactor is Mg(2+).

The protein localises to the cell inner membrane. The enzyme catalyses GMP + diphosphate = guanine + 5-phospho-alpha-D-ribose 1-diphosphate. It catalyses the reaction XMP + diphosphate = xanthine + 5-phospho-alpha-D-ribose 1-diphosphate. The catalysed reaction is IMP + diphosphate = hypoxanthine + 5-phospho-alpha-D-ribose 1-diphosphate. Its pathway is purine metabolism; GMP biosynthesis via salvage pathway; GMP from guanine: step 1/1. It participates in purine metabolism; XMP biosynthesis via salvage pathway; XMP from xanthine: step 1/1. In terms of biological role, purine salvage pathway enzyme that catalyzes the transfer of the ribosyl-5-phosphate group from 5-phospho-alpha-D-ribose 1-diphosphate (PRPP) to the N9 position of the 6-oxopurines guanine and xanthine to form the corresponding ribonucleotides GMP (guanosine 5'-monophosphate) and XMP (xanthosine 5'-monophosphate), with the release of PPi. To a lesser extent, also acts on hypoxanthine. The protein is Xanthine-guanine phosphoribosyltransferase of Roseobacter denitrificans (strain ATCC 33942 / OCh 114) (Erythrobacter sp. (strain OCh 114)).